Consider the following 538-residue polypeptide: Syncytin-2 (538 aa).

The N-terminal stretch at 1–15 is a signal peptide; the sequence is MGLLLLVLILTPSLA. The Extracellular portion of the chain corresponds to 16–478; the sequence is AYRHPDFPLL…GWLNWEGTWK (463 aa). The short motif at 43-46 is the CXXC element; it reads CWLC. 3 disulfides stabilise this stretch: Cys43–Cys46, Cys43–Cys439, and Cys431–Cys438. Asn133, Asn146, Asn177, Asn220, Asn241, Asn247, Asn312, and Asn332 each carry an N-linked (GlcNAc...) asparagine glycan. The segment at 354 to 374 is fusion peptide; it reads FIPLLAGLGILAGTGTGIAGI. Residues 414 to 430 carry the CKS-17 motif; it reads LQNRRGLDMLTAAQGGI. The short motif at 431–439 is the CX6CC element; sequence CLALDEKCC. N-linked (GlcNAc...) asparagine glycosylation occurs at Asn443. The chain crosses the membrane as a helical span at residues 479–499; it reads WFSWVLPLTGPLVSLLLLLLF. The Cytoplasmic portion of the chain corresponds to 500–538; that stretch reads GPCLLNLITQFVSSRLQAIKLQTNLSAGRHPRNIQESPF.

It belongs to the gamma type-C retroviral envelope protein family. HERV class-I FRD env subfamily. As to quaternary structure, the surface and transmembrane proteins form a heterodimer. They are attached by non-covalent interactions or by a labile interchain disulfide bond. Interacts with MFSD2A. In terms of processing, specific enzymatic cleavages in vivo yield the mature SU and TM proteins. The CXXC motif is highly conserved across a broad range of retroviral envelope proteins. It is thought to participate in the formation of a labile disulfide bond possibly with the CX6CC motif present in the transmembrane protein. Isomerization of the intersubunit disulfide bond to an SU intrachain disulfide bond is thought to occur upon receptor recognition in order to allow membrane fusion. Expressed at higher level in placenta. Expressed at lower level in adrenal, bone marrow, brain, breast, colon, kidney, lung, ovary, peripheral blood lymphocytes, prostate, skin, spleen, testis, thymus, thyroid, trachea.

It is found in the virion. The protein resides in the cell membrane. In terms of biological role, this endogenous retroviral envelope protein has retained its original fusogenic properties and participates in trophoblast fusion and the formation of a syncytium during placenta morphogenesis. The interaction with MFSD2A is apparently important for this process. Its function is as follows. Endogenous envelope proteins may have kept, lost or modified their original function during evolution but this one can still make pseudotypes with MLV, HIV-1 or SIV-1 virions and confer infectivity. Retroviral envelope proteins mediate receptor recognition and membrane fusion during early infection. The surface protein mediates receptor recognition, while the transmembrane protein anchors the envelope heterodimer to the viral membrane through one transmembrane domain. The other hydrophobic domain, called fusion peptide, mediates fusion of the viral membrane with the target cell membrane. This Homo sapiens (Human) protein is Syncytin-2 (ERVFRD-1).